A 210-amino-acid polypeptide reads, in one-letter code: 3-hexulose-6-phosphate synthase (210 aa).

The protein belongs to the HPS/KGPDC family. HPS subfamily.

It catalyses the reaction D-ribulose 5-phosphate + formaldehyde = D-arabino-hex-3-ulose 6-phosphate. It functions in the pathway one-carbon metabolism; formaldehyde assimilation via RuMP pathway; D-fructose 6-phosphate from D-ribulose 5-phosphate and formaldehyde: step 1/2. In terms of biological role, catalyzes the condensation of ribulose 5-phosphate with formaldehyde to form 3-hexulose 6-phosphate. This Staphylococcus aureus (strain NCTC 8325 / PS 47) protein is 3-hexulose-6-phosphate synthase.